A 147-amino-acid chain; its full sequence is Prefoldin subunit alpha (147 aa).

It belongs to the prefoldin subunit alpha family. In terms of assembly, heterohexamer of two alpha and four beta subunits.

The protein localises to the cytoplasm. Molecular chaperone capable of stabilizing a range of proteins. Seems to fulfill an ATP-independent, HSP70-like function in archaeal de novo protein folding. The protein is Prefoldin subunit alpha (pfdA) of Saccharolobus solfataricus (strain ATCC 35092 / DSM 1617 / JCM 11322 / P2) (Sulfolobus solfataricus).